A 165-amino-acid polypeptide reads, in one-letter code: Transcription elongation factor GreA (165 aa).

Residues 55–78 (AAKEEQGKQELRVRQLTQLLENAK) adopt a coiled-coil conformation.

It belongs to the GreA/GreB family.

In terms of biological role, necessary for efficient RNA polymerase transcription elongation past template-encoded arresting sites. The arresting sites in DNA have the property of trapping a certain fraction of elongating RNA polymerases that pass through, resulting in locked ternary complexes. Cleavage of the nascent transcript by cleavage factors such as GreA or GreB allows the resumption of elongation from the new 3'terminus. GreA releases sequences of 2 to 3 nucleotides. In Streptomyces avermitilis (strain ATCC 31267 / DSM 46492 / JCM 5070 / NBRC 14893 / NCIMB 12804 / NRRL 8165 / MA-4680), this protein is Transcription elongation factor GreA.